A 68-amino-acid chain; its full sequence is Molybdenum-pterin-binding protein 2 (68 aa).

A Mop domain is found at 2-68 (SISARNQLKG…VKSTDVMILA (67 aa)).

Its function is as follows. Binds one mole of molybdenum per mole of protein and contains a pterin. The chain is Molybdenum-pterin-binding protein 2 (mopII) from Clostridium pasteurianum.